The sequence spans 55 residues: Large ribosomal subunit protein bL33 (55 aa).

The protein belongs to the bacterial ribosomal protein bL33 family.

This chain is Large ribosomal subunit protein bL33, found in Buchnera aphidicola subsp. Schizaphis graminum (strain Sg).